The chain runs to 151 residues: Arginine repressor (151 aa).

This sequence belongs to the ArgR family.

It localises to the cytoplasm. The protein operates within amino-acid biosynthesis; L-arginine biosynthesis [regulation]. Regulates arginine biosynthesis genes. The sequence is that of Arginine repressor from Clostridium novyi (strain NT).